Reading from the N-terminus, the 63-residue chain is Large ribosomal subunit protein bL32 (63 aa).

Disordered regions lie at residues 1 to 25 (MAVP…LTTP) and 42 to 63 (VSPK…QNND). Positions 7-20 (KTSKQKKRSRRGHI) are enriched in basic residues. Positions 54–63 (ANENKQQNND) are enriched in polar residues.

The protein belongs to the bacterial ribosomal protein bL32 family.

The polypeptide is Large ribosomal subunit protein bL32 (Lactobacillus johnsonii (strain CNCM I-12250 / La1 / NCC 533)).